The primary structure comprises 494 residues: Putative bifunctional dihydrofolate reductase-thymidylate synthase (494 aa).

One can recognise a DHFR domain in the interval 1 to 167 (MGIGKDGTLP…IKHSFISFVR (167 aa)). 2-8 (GIGKDGT) serves as a coordination point for NADP(+). Substrate is bound at residue Asp16. Residues 40 to 42 (RKT) and 61 to 64 (LTRS) each bind NADP(+). Ile103 is a binding site for substrate. An NADP(+)-binding site is contributed by 104 to 111 (GGGEILRQ). Thr124 lines the substrate pocket. The segment at 170 to 494 (KSIAEANDSS…HHKIEMKMAV (325 aa)) is thymidylate synthase. Arg231 is a binding site for dUMP. Cys376 is a catalytic residue. DUMP contacts are provided by residues His377, 395–399 (QRSAD), Asn407, and 437–439 (HVY).

It in the N-terminal section; belongs to the dihydrofolate reductase family. The protein in the C-terminal section; belongs to the thymidylate synthase family.

It carries out the reaction (6S)-5,6,7,8-tetrahydrofolate + NADP(+) = 7,8-dihydrofolate + NADPH + H(+). The catalysed reaction is dUMP + (6R)-5,10-methylene-5,6,7,8-tetrahydrofolate = 7,8-dihydrofolate + dTMP. Its pathway is cofactor biosynthesis; tetrahydrofolate biosynthesis; 5,6,7,8-tetrahydrofolate from 7,8-dihydrofolate: step 1/1. Its function is as follows. Bifunctional enzyme. Involved in de novo dTMP biosynthesis. Key enzyme in folate metabolism. Can play two different roles depending on the source of dihydrofolate: de novo synthesis of tetrahydrofolate or recycling of the dihydrofolate released as one of the end products of the TS catalyzed reaction. Catalyzes an essential reaction for de novo glycine and purine synthesis, DNA precursor synthesis, and for the conversion of dUMP to dTMP. This Oryza sativa subsp. japonica (Rice) protein is Putative bifunctional dihydrofolate reductase-thymidylate synthase.